A 668-amino-acid chain; its full sequence is Auxilin-like clathrin uncoating factor SWA2 (668 aa).

The interval 1 to 95 (MSDPFAHLLT…ANNTPPSALA (95 aa)) is disordered. The segment at 1–100 (MSDPFAHLLT…PSALANTDDD (100 aa)) is CB1. Residues 17 to 36 (SASASKETTPQSSNSPSITG) show a composition bias toward polar residues. Phosphoserine occurs at positions 52 and 64. Residues 76-92 (PTNSTTKSNTANNTPPS) show a composition bias toward low complexity. The 41-residue stretch at 140–180 (DEVKDMEIARLMSLGLSIEEATEFYENDVTYERYLEILKSK) folds into the UBA domain. The tract at residues 238 to 302 (EANDRLNNYS…FETKIDITKR (65 aa)) is CB2. A phosphoserine mark is found at serine 264, serine 308, and serine 312. Disordered regions lie at residues 302–323 (RTAPDVSHSSSPTSGILIEENS) and 339–359 (EGNLTNSKSNEDSTLFNENSN). Residues 303–362 (TAPDVSHSSSPTSGILIEENSRRNEPLIEDSLLDFSEGNLTNSKSNEDSTLFNENSNTDS) are CB3. Positions 340–359 (GNLTNSKSNEDSTLFNENSN) are enriched in polar residues. TPR repeat units follow at residues 374 to 407 (YNEFKAKGTSLFKNGDYINSLQEYEKSLNTLPLN), 412 to 445 (IIALSNIIASQLKIGEYSKSIENSSMALELFPSS), and 467 to 500 (PKIMIRRAESFEHLESFKKALETYQELIKKNFFD). Residues 511-556 (QDFINPPPVKKSMPVKKKTTTTSPATKKQNLTASSSNSPISVDSTS) form a disordered region. Residues 539 to 555 (QNLTASSSNSPISVDST) show a composition bias toward polar residues. In terms of domain architecture, J spans 603-668 (CNWKDVSMQD…DKFKLQNDIN (66 aa)).

As to quaternary structure, interacts with the clathrin light and heavy chains CLC1 and CHC1, respectively. Binds to clathrin with its N-terminal domain containing 3 clathrin-binding (CB) motifs. Association with clathrin is transient. Binds to polyubiquitin and ubiquitinated proteins.

It is found in the cytoplasm. The protein resides in the endoplasmic reticulum membrane. Cofactor for the uncoating of clathrin-coated vesicles (CCVs) by Hsp70-type chaperones (SSA1/2/3 and SSB1/2). Coat disassembly is important for fusion of vesicles with target membranes and for recycling components of clathrin coats to the cytoplasm for further rounds of vesicle formation. Binds to assembled clathrin and recruits the ATP-activated chaperone to CCVs. Stimulates the ATPase activity of the clathrin-associated Hsp70-type chaperone SSA1, which then disrupts clathrin-clathrin interactions, leading to release of the clathrin coat. In addition, prevents unproductive clathrin assembly in the cell. Also required for cortical endoplasmic reticulum inheritance. This chain is Auxilin-like clathrin uncoating factor SWA2 (SWA2), found in Saccharomyces cerevisiae (strain ATCC 204508 / S288c) (Baker's yeast).